Consider the following 351-residue polypeptide: Divinyl chlorophyll a/b light-harvesting protein PcbC (351 aa).

Transmembrane regions (helical) follow at residues 27–47 (FIAA…AFTL), 64–84 (LICL…GVIT), 89–109 (CTVI…GGLL), 203–223 (VMGG…FHIA), 244–264 (VLSY…FWCA), and 306–326 (LSNV…WHAL).

The protein belongs to the PsbB/PsbC family. IsiA/Pcb subfamily. The antenna complex consists of divinyl chlorophylls (a and b) and divinyl chlorophyll a/b binding proteins and binds more divinyl chlorophyll b than does the antenna complex from high-light-adapted Prochlorococcus. The cofactor is divinyl chlorophyll a. Divinyl chlorophyll b serves as cofactor.

The protein resides in the cellular thylakoid membrane. In terms of biological role, the antenna complex functions as a light receptor, it captures and delivers excitation energy to photosystems II and I. The Prochlorales pcb genes are not related to higher plant LHCs. The protein is Divinyl chlorophyll a/b light-harvesting protein PcbC (pcbC) of Prochlorococcus marinus (strain SARG / CCMP1375 / SS120).